The following is a 174-amino-acid chain: Ribosome maturation factor RimM (174 aa).

Residues 101 to 174 (AGEFYLADLC…IELLQRWILE (74 aa)) form the PRC barrel domain.

This sequence belongs to the RimM family. In terms of assembly, binds ribosomal protein uS19.

The protein localises to the cytoplasm. Functionally, an accessory protein needed during the final step in the assembly of 30S ribosomal subunit, possibly for assembly of the head region. Essential for efficient processing of 16S rRNA. May be needed both before and after RbfA during the maturation of 16S rRNA. It has affinity for free ribosomal 30S subunits but not for 70S ribosomes. This Treponema pallidum (strain Nichols) protein is Ribosome maturation factor RimM.